Here is a 33-residue protein sequence, read N- to C-terminus: MSDINATRLPIWGIGCNPSVGDEVTALLASGEA.

Positions 1-10 (MSDINATRLP) are excised as a propeptide. The residue at position 11 (Ile11) is a (3R,4R)-4,5-dihydroxyisoleucine; in form alpha-amanitin. Ile11 carries the post-translational modification (3R,4S)-4-hydroxyisoleucine; in form gamma-amanitin. Residues 11 to 18 (IWGIGCNP) constitute a cross-link (cyclopeptide (Ile-Pro)). Positions 12 to 16 (WGIGC) form a cross-link, 2'-cysteinyl-6'-hydroxytryptophan sulfoxide (Trp-Cys). Pro18 is subject to 4-hydroxyproline. A propeptide spanning residues 19 to 33 (SVGDEVTALLASGEA) is cleaved from the precursor.

Belongs to the MSDIN fungal toxin family. Processed by the macrocyclase-peptidase enzyme POPB to yield a toxic cyclic decapeptide. POPB first removes 10 residues from the N-terminus. Conformational trapping of the remaining peptide forces the enzyme to release this intermediate rather than proceed to macrocyclization. The enzyme rebinds the remaining peptide in a different conformation and catalyzes macrocyclization of the N-terminal 8 residues.

Major toxin belonging to the bicyclic octapeptides amatoxins that acts by binding non-competitively to RNA polymerase II and greatly slowing the elongation of transcripts from target promoters. The sequence is that of Alpha-amanitin proprotein from Amanita rimosa.